We begin with the raw amino-acid sequence, 309 residues long: Pyridoxal kinase (309 aa).

Residue T2 is modified to N-acetylthreonine; in Pyridoxal kinase, N-terminally processed. Pyridoxal-binding residues include S23 and T58. T58 contacts pyridoxal 5'-phosphate. D124 contacts ATP. D124 contacts Na(+). A Mg(2+)-binding site is contributed by D129. T155 contacts Na(+). Residues 157–160 (NQFE), 193–194 (TS), 225–227 (IPA), and T232 contribute to the ATP site. T193 serves as a coordination point for Na(+). 233 to 234 (GD) is a pyridoxal 5'-phosphate binding site. D234 functions as the Proton acceptor in the catalytic mechanism.

Belongs to the pyridoxine kinase family. As to quaternary structure, homodimer. Requires Zn(2+) as cofactor. As to expression, expressed ubiquitously in leaves, stems, roots, flowers and siliques. Present in root hairs and other tip-growing cells such as papillar cells on the top of stigma.

The enzyme catalyses pyridoxal + ATP = pyridoxal 5'-phosphate + ADP + H(+). It functions in the pathway cofactor metabolism; pyridoxal 5'-phosphate salvage; pyridoxal 5'-phosphate from pyridoxal: step 1/1. In terms of biological role, catalyzes the transfer of a phosphate group from ATP to the 5-hydroxylmethyl group of pyridoxal to form the biologically active pyridoxal phosphate, an active form of vitamin B6. Required for Na(+) and K(+) homeostasis and for salt tolerance. Involved in root hair development, both for initiation and tip growth. The polypeptide is Pyridoxal kinase (Arabidopsis thaliana (Mouse-ear cress)).